An 84-amino-acid chain; its full sequence is Putative membrane protein insertion efficiency factor (84 aa).

The protein belongs to the UPF0161 family.

The protein resides in the cell inner membrane. In terms of biological role, could be involved in insertion of integral membrane proteins into the membrane. The protein is Putative membrane protein insertion efficiency factor of Shewanella loihica (strain ATCC BAA-1088 / PV-4).